We begin with the raw amino-acid sequence, 182 residues long: Large ribosomal subunit protein bL25 (182 aa).

This sequence belongs to the bacterial ribosomal protein bL25 family. CTC subfamily. Part of the 50S ribosomal subunit; part of the 5S rRNA/L5/L18/L25 subcomplex. Contacts the 5S rRNA. Binds to the 5S rRNA independently of L5 and L18.

Its function is as follows. This is one of the proteins that binds to the 5S RNA in the ribosome where it forms part of the central protuberance. The chain is Large ribosomal subunit protein bL25 from Borreliella afzelii (strain PKo) (Borrelia afzelii).